The primary structure comprises 536 residues: Enterobactin synthase component E (536 aa).

The substrate site is built by N235, S240, G309, V331, A335, D415, and K432. The phosphopantetheine binding stretch occupies residues 438 to 439 (GG). K441 is a binding site for substrate.

This sequence belongs to the ATP-dependent AMP-binding enzyme family. EntE subfamily. As to quaternary structure, proteins EntB, EntD, EntE, and EntF form a multienzyme complex called enterobactin synthase. Monomer. EntA and EntE interact together.

It localises to the membrane. The enzyme catalyses 3 2,3-dihydroxybenzoate + 3 L-serine + 6 ATP = enterobactin + 6 AMP + 6 diphosphate + 4 H(+). It catalyses the reaction 2,3-dihydroxybenzoate + holo-[ACP] + ATP = 2,3-dihydroxybenzoyl-[ACP] + AMP + diphosphate. The catalysed reaction is 2,3-dihydroxybenzoyl-5'-AMP + holo-[ACP] = 2,3-dihydroxybenzoyl-[ACP] + AMP + H(+). Its pathway is siderophore biosynthesis; enterobactin biosynthesis. Its activity is regulated as follows. Inhibited by the adenylate analogs, 5'-O-[N-(salicyl)sulfamoyl]adenosine (Sal-AMS) and 5'-O-[N-(2,3-dihydroxybenzoyl)sulfamoyl]adenosine (DHB-AMS). Adenylation of 2,3-dihydroxybenzoate (DHB) is enhanced by a protein-protein interaction between the EntA and EntE. In terms of biological role, involved in the biosynthesis of the siderophore enterobactin (enterochelin), which is a macrocyclic trimeric lactone of N-(2,3-dihydroxybenzoyl)-serine. The serine trilactone serves as a scaffolding for the three catechol functionalities that provide hexadentate coordination for the tightly ligated iron(2+) atoms. EntE processes via a two-step adenylation-ligation reaction (bi-uni-uni-bi ping-pong mechanism). First, it catalyzes the activation of the carboxylate group of 2,3-dihydroxy-benzoate (DHB), via a reversible ATP-dependent pyrophosphate exchange reactions to yield the acyladenylate intermediate 2,3-dihydroxybenzoyl-AMP. It can also transfer AMP to salicylate, 2,4-dihydroxybenzoate, gentisate and 2,3,4-trihydroxybenzoate. In the second step, DHB is transferred from 2,3-dihydroxybenzoyl-AMP onto the phosphopantetheinylated EntB (holo-EntB) to form DHB-holo-EntB. Then this product will serve in the formation of the amide bond between 2,3-dihydroxybenzoate (DHB) and L-serine. It can also transfer adenylated salicylate to holo-EntB. This Escherichia coli (strain K12) protein is Enterobactin synthase component E.